The sequence spans 332 residues: Beta-ketoacyl-[acyl-carrier-protein] synthase III 2 (332 aa).

Residues C115 and H252 contribute to the active site. The ACP-binding stretch occupies residues 253–257; sequence SANLR. Residue N282 is part of the active site.

The protein belongs to the thiolase-like superfamily. FabH family. Homodimer.

It is found in the cytoplasm. It catalyses the reaction malonyl-[ACP] + acetyl-CoA + H(+) = 3-oxobutanoyl-[ACP] + CO2 + CoA. Its pathway is lipid metabolism; fatty acid biosynthesis. Catalyzes the condensation reaction of fatty acid synthesis by the addition to an acyl acceptor of two carbons from malonyl-ACP. Catalyzes the first condensation reaction which initiates fatty acid synthesis and may therefore play a role in governing the total rate of fatty acid production. Possesses both acetoacetyl-ACP synthase and acetyl transacylase activities. Its substrate specificity determines the biosynthesis of branched-chain and/or straight-chain of fatty acids. This Halalkalibacterium halodurans (strain ATCC BAA-125 / DSM 18197 / FERM 7344 / JCM 9153 / C-125) (Bacillus halodurans) protein is Beta-ketoacyl-[acyl-carrier-protein] synthase III 2.